Reading from the N-terminus, the 1953-residue chain is Putative surface-exposed virulence protein BigA (1953 aa).

An N-terminal signal peptide occupies residues 1–27 (MNPMQKKKLISIAIALTLQSYYIPAIA). Disordered stretches follow at residues 31 to 50 (NDDE…EKRA), 88 to 258 (GGGD…TFSN), and 1496 to 1517 (TTAP…PQQL). A 1; truncated repeat occupies 101 to 103 (PDN). The segment at 101 to 252 (PDNGGDVTPP…DDDDTPPDDS (152 aa)) is 15 X 11 AA tandem repeats. One copy of the 2; truncated repeat lies at 104 to 113 (GGDVTPPDDG). Residues 114 to 122 (GNVTPPDDG) form a 3; truncated repeat. Tandem repeats lie at residues 123–133 (GNVTPPDDGGD), 134–144 (DNVTPPDDSGD), 145–155 (DDVAPPDDSGD), 156–166 (DDVTPPDDSGD), 167–177 (DDVTPPDDSGD), 178–188 (GDVTPPDDSGD), 189–199 (DDVTPPDDSGD), 200–210 (DDVTPPDDSGD), 211–221 (DDVTPPDDSGD), 222–232 (DDVTPPDDSGD), and 233–243 (DDVTPPDDSGD). Composition is skewed to acidic residues over residues 141 to 177 (DSGD…DSGD) and 185 to 249 (DSGD…DTPP). One copy of the 15; truncated repeat lies at 244 to 252 (DDDTPPDDS). Residues 1649 to 1952 (SGAQATTVFR…GFMLNVKKTF (304 aa)) enclose the Autotransporter domain.

This chain is Putative surface-exposed virulence protein BigA (bigA), found in Salmonella typhimurium (strain LT2 / SGSC1412 / ATCC 700720).